We begin with the raw amino-acid sequence, 72 residues long: Translation initiation factor IF-1 (72 aa).

Residues 1–72 (MAKEDNIEMQ…SKGRIVFRSR (72 aa)) enclose the S1-like domain.

The protein belongs to the IF-1 family. Component of the 30S ribosomal translation pre-initiation complex which assembles on the 30S ribosome in the order IF-2 and IF-3, IF-1 and N-formylmethionyl-tRNA(fMet); mRNA recruitment can occur at any time during PIC assembly.

Its subcellular location is the cytoplasm. In terms of biological role, one of the essential components for the initiation of protein synthesis. Stabilizes the binding of IF-2 and IF-3 on the 30S subunit to which N-formylmethionyl-tRNA(fMet) subsequently binds. Helps modulate mRNA selection, yielding the 30S pre-initiation complex (PIC). Upon addition of the 50S ribosomal subunit IF-1, IF-2 and IF-3 are released leaving the mature 70S translation initiation complex. The protein is Translation initiation factor IF-1 of Sodalis glossinidius (strain morsitans).